The sequence spans 288 residues: Protease HtpX (288 aa).

The next 2 helical transmembrane spans lie at isoleucine 5–leucine 25 and glycine 35–serine 55. Position 140 (histidine 140) interacts with Zn(2+). Glutamate 141 is a catalytic residue. Histidine 144 serves as a coordination point for Zn(2+). 2 consecutive transmembrane segments (helical) span residues leucine 155–isoleucine 175 and isoleucine 194–phenylalanine 214. Glutamate 219 provides a ligand contact to Zn(2+).

The protein belongs to the peptidase M48B family. It depends on Zn(2+) as a cofactor.

The protein localises to the cell inner membrane. The protein is Protease HtpX of Stenotrophomonas maltophilia (strain K279a).